Reading from the N-terminus, the 313-residue chain is 4-diphosphocytidyl-2-C-methyl-D-erythritol kinase (313 aa).

The active site involves lysine 29. Proline 113 to serine 123 lines the ATP pocket. Aspartate 155 is a catalytic residue.

This sequence belongs to the GHMP kinase family. IspE subfamily.

It carries out the reaction 4-CDP-2-C-methyl-D-erythritol + ATP = 4-CDP-2-C-methyl-D-erythritol 2-phosphate + ADP + H(+). It functions in the pathway isoprenoid biosynthesis; isopentenyl diphosphate biosynthesis via DXP pathway; isopentenyl diphosphate from 1-deoxy-D-xylulose 5-phosphate: step 3/6. Its function is as follows. Catalyzes the phosphorylation of the position 2 hydroxy group of 4-diphosphocytidyl-2C-methyl-D-erythritol. This chain is 4-diphosphocytidyl-2-C-methyl-D-erythritol kinase, found in Haemophilus influenzae (strain ATCC 51907 / DSM 11121 / KW20 / Rd).